Reading from the N-terminus, the 147-residue chain is Small ribosomal subunit protein eS19 (147 aa).

It belongs to the eukaryotic ribosomal protein eS19 family. In terms of assembly, component of the small ribosomal subunit.

The protein resides in the cytoplasm. It localises to the nucleus. Functionally, component of the small ribosomal subunit. The ribosome is a large ribonucleoprotein complex responsible for the synthesis of proteins in the cell. Required for pre-rRNA processing and maturation of 40S ribosomal subunits. The chain is Small ribosomal subunit protein eS19 (rps19) from Ictalurus punctatus (Channel catfish).